The sequence spans 160 residues: UPF0225 protein PP_1119 (160 aa).

The protein belongs to the UPF0225 family.

The sequence is that of UPF0225 protein PP_1119 from Pseudomonas putida (strain ATCC 47054 / DSM 6125 / CFBP 8728 / NCIMB 11950 / KT2440).